Consider the following 775-residue polypeptide: Phosphoribosylformylglycinamidine synthase subunit PurL (775 aa).

Residue His-81 is part of the active site. Positions 84 and 123 each coordinate ATP. Glu-125 provides a ligand contact to Mg(2+). Residues 126-129 and Arg-148 each bind substrate; that span reads SHNH. Catalysis depends on His-127, which acts as the Proton acceptor. Asp-149 is a binding site for Mg(2+). Gln-272 provides a ligand contact to substrate. Asp-300 provides a ligand contact to Mg(2+). 344–346 lines the substrate pocket; it reads ESQ. ATP is bound by residues Asp-525 and Gly-562. Position 563 (Asn-563) interacts with Mg(2+). Ser-565 is a binding site for substrate.

This sequence belongs to the FGAMS family. Monomer. Part of the FGAM synthase complex composed of 1 PurL, 1 PurQ and 2 PurS subunits.

It localises to the cytoplasm. It carries out the reaction N(2)-formyl-N(1)-(5-phospho-beta-D-ribosyl)glycinamide + L-glutamine + ATP + H2O = 2-formamido-N(1)-(5-O-phospho-beta-D-ribosyl)acetamidine + L-glutamate + ADP + phosphate + H(+). The protein operates within purine metabolism; IMP biosynthesis via de novo pathway; 5-amino-1-(5-phospho-D-ribosyl)imidazole from N(2)-formyl-N(1)-(5-phospho-D-ribosyl)glycinamide: step 1/2. Functionally, part of the phosphoribosylformylglycinamidine synthase complex involved in the purines biosynthetic pathway. Catalyzes the ATP-dependent conversion of formylglycinamide ribonucleotide (FGAR) and glutamine to yield formylglycinamidine ribonucleotide (FGAM) and glutamate. The FGAM synthase complex is composed of three subunits. PurQ produces an ammonia molecule by converting glutamine to glutamate. PurL transfers the ammonia molecule to FGAR to form FGAM in an ATP-dependent manner. PurS interacts with PurQ and PurL and is thought to assist in the transfer of the ammonia molecule from PurQ to PurL. The polypeptide is Phosphoribosylformylglycinamidine synthase subunit PurL (Agrobacterium fabrum (strain C58 / ATCC 33970) (Agrobacterium tumefaciens (strain C58))).